A 400-amino-acid polypeptide reads, in one-letter code: Acetate kinase (400 aa).

N9 contacts Mg(2+). Residue K16 participates in ATP binding. R90 contacts substrate. D147 functions as the Proton donor/acceptor in the catalytic mechanism. ATP contacts are provided by residues H207 to G211, D282 to R284, and G330 to N334. Mg(2+) is bound at residue E385.

Belongs to the acetokinase family. In terms of assembly, homodimer. It depends on Mg(2+) as a cofactor. Requires Mn(2+) as cofactor.

It is found in the cytoplasm. It carries out the reaction acetate + ATP = acetyl phosphate + ADP. It functions in the pathway metabolic intermediate biosynthesis; acetyl-CoA biosynthesis; acetyl-CoA from acetate: step 1/2. Functionally, catalyzes the formation of acetyl phosphate from acetate and ATP. Can also catalyze the reverse reaction. This Staphylococcus aureus (strain Mu3 / ATCC 700698) protein is Acetate kinase.